The chain runs to 906 residues: Rho GTPase-activating protein gacJ (906 aa).

A disordered region spans residues 53–117 (LEGHLNPSSH…RDNSRSDNIR (65 aa)). A compositionally biased stretch (low complexity) spans 69 to 79 (NNNNNNNNNNN). Residues 92–117 (SRSDSKHHNRENSKSDRDNSRSDNIR) are compositionally biased toward basic and acidic residues. The Rho-GAP domain occupies 161-348 (EELQSLYPDQ…YMLEYFNDIF (188 aa)). 3 disordered regions span residues 368–415 (DTTS…SRSK), 452–864 (EIIP…SVLT), and 877–906 (ANQA…NINK). Residues 381-404 (NGGSPRTSNTPYQQQHQLSSQSMA) show a composition bias toward polar residues. Residues 461-487 (TTTTTTTTTNTTTTTTTTNTTPNNTTT) show a composition bias toward low complexity. 2 stretches are compositionally biased toward pro residues: residues 494 to 510 (PVPP…PPNP) and 547 to 560 (QPPP…PSPP). The span at 565 to 574 (KPTSKSDFIP) shows a compositional bias: polar residues. Low complexity-rich tracts occupy residues 575–597 (STNN…SIPK) and 613–629 (IEEP…TTTT). A compositionally biased stretch (polar residues) spans 637-649 (FKNNGTISSGSKS). 2 stretches are compositionally biased toward low complexity: residues 650–663 (NPNL…NQPL) and 683–694 (SKPITTTPTIKK). A compositionally biased stretch (pro residues) spans 708 to 721 (PPSPSSSSPSPPHN). Composition is skewed to low complexity over residues 754–772 (PTIP…PTTP), 785–816 (PPIN…STPK), and 844–861 (SSPT…SSPS). Positions 880–890 (AKKNPLSNSGG) are enriched in polar residues.

It localises to the cytoplasm. Functionally, rho GTPase-activating protein involved in the signal transduction pathway. The sequence is that of Rho GTPase-activating protein gacJ (gacJ) from Dictyostelium discoideum (Social amoeba).